The chain runs to 273 residues: Dermonecrotic toxin LhSicTox-alphaIA2av (273 aa).

His-5 is an active-site residue. Mg(2+) is bound by residues Glu-25 and Asp-27. The active-site Nucleophile is His-41. Cystine bridges form between Cys-45-Cys-51 and Cys-47-Cys-190. Mg(2+) is bound at residue Asp-85.

It belongs to the arthropod phospholipase D family. Class II subfamily. Mg(2+) serves as cofactor. In terms of tissue distribution, expressed by the venom gland.

Its subcellular location is the secreted. The catalysed reaction is an N-(acyl)-sphingosylphosphocholine = an N-(acyl)-sphingosyl-1,3-cyclic phosphate + choline. It carries out the reaction an N-(acyl)-sphingosylphosphoethanolamine = an N-(acyl)-sphingosyl-1,3-cyclic phosphate + ethanolamine. The enzyme catalyses a 1-acyl-sn-glycero-3-phosphocholine = a 1-acyl-sn-glycero-2,3-cyclic phosphate + choline. It catalyses the reaction a 1-acyl-sn-glycero-3-phosphoethanolamine = a 1-acyl-sn-glycero-2,3-cyclic phosphate + ethanolamine. Its function is as follows. Dermonecrotic toxins cleave the phosphodiester linkage between the phosphate and headgroup of certain phospholipids (sphingolipid and lysolipid substrates), forming an alcohol (often choline) and a cyclic phosphate. This toxin acts on sphingomyelin (SM). It may also act on ceramide phosphoethanolamine (CPE), lysophosphatidylcholine (LPC) and lysophosphatidylethanolamine (LPE), but not on lysophosphatidylserine (LPS), and lysophosphatidylglycerol (LPG). It acts by transphosphatidylation, releasing exclusively cyclic phosphate products as second products. Induces dermonecrosis, hemolysis, increased vascular permeability, edema, inflammatory response, and platelet aggregation. The polypeptide is Dermonecrotic toxin LhSicTox-alphaIA2av (Loxosceles hirsuta (Recluse spider)).